Here is a 425-residue protein sequence, read N- to C-terminus: Protein UL117 (425 aa).

The disordered stretch occupies residues 59–83 (PTTTSSSLAPPRDDERRPTPPLRPP).

This sequence belongs to the herpesviridae U84 family.

It localises to the host nucleus. Functionally, plays a role in the inhibition of host DNA replication in the infected cell. Targets the mini-chromosome maintenance (MCM) complex and blocks the accumulation of MCM proteins and their loading onto host chromatin. The sequence is that of Protein UL117 (UL117) from Homo sapiens (Human).